The sequence spans 722 residues: Probable acyl-activating enzyme 16, chloroplastic (722 aa).

Residues 1–47 constitute a chloroplast transit peptide; it reads MASTSLGASILVSHCSSAPEFQVSGMRLVFGYKAFGCRTSRRGFRVR.

It belongs to the ATP-dependent AMP-binding enzyme family.

The protein resides in the plastid. Its subcellular location is the chloroplast. May be involved in the activation of fatty acids to acyl-carrier-protein. The protein is Probable acyl-activating enzyme 16, chloroplastic (AAE16) of Arabidopsis thaliana (Mouse-ear cress).